Consider the following 464-residue polypeptide: MTEEKTPKQIVELLDKYIIGQNEAKKSVAVALYNRYRRLQLPKQMQQDITPKNMLMAGPTGVGKTEIARRLAKIVDAPFVKVEATKFTEVGYVGRDVESMVRDLVEEAVRMEEKEQFDRVKLQATKKANNRLVKLIVPGIKRENRENSMQQMMQMLSGNFNMNQAQDNEEVTDDIRNERLSVADQLNKGLLENREVTIEVEQAPKVNPMGDMMGQMGIDMSSLMGDLMPKKTVKRTLKVSDAREVLIQEESKKLINYDSLYQRAIERTQQNGIIFIDEIDKITAGNKKTSGEVSREGVQRDILPIVEGSTVSTKYGPVSTDHILFIAAGAFAESKPSDLIPELQGRFPIRVELNALTQEDFVKILKDPQNSLLKQYIALLKADGIKLVFTQEAIDRIAQIAFEVNQGTDNIGARRLATILEKLLEDVLYEGPDMNMGEITITQKYVDQKLSDIIINKDLTKFIL.

Residues isoleucine 19, 61–66, aspartate 277, glutamate 342, and arginine 414 each bind ATP; that span reads GVGKTE.

It belongs to the ClpX chaperone family. HslU subfamily. As to quaternary structure, a double ring-shaped homohexamer of HslV is capped on each side by a ring-shaped HslU homohexamer. The assembly of the HslU/HslV complex is dependent on binding of ATP.

The protein resides in the cytoplasm. ATPase subunit of a proteasome-like degradation complex; this subunit has chaperone activity. The binding of ATP and its subsequent hydrolysis by HslU are essential for unfolding of protein substrates subsequently hydrolyzed by HslV. HslU recognizes the N-terminal part of its protein substrates and unfolds these before they are guided to HslV for hydrolysis. The chain is ATP-dependent protease ATPase subunit HslU from Lactobacillus gasseri (strain ATCC 33323 / DSM 20243 / BCRC 14619 / CIP 102991 / JCM 1131 / KCTC 3163 / NCIMB 11718 / NCTC 13722 / AM63).